An 806-amino-acid chain; its full sequence is Ribonucleoside-diphosphate reductase large subunit-like protein (806 aa).

This sequence belongs to the ribonucleoside diphosphate reductase large chain family.

It is found in the virion. Its subcellular location is the host cytoplasm. Functionally, does not possess a ribonucleotide reductase activity. Betaherpesviruses probably use another strategy to expand the dNTP pool in a quiescent host cell. The protein is Ribonucleoside-diphosphate reductase large subunit-like protein of Human herpesvirus 7 (strain JI) (HHV-7).